Here is a 278-residue protein sequence, read N- to C-terminus: Manganese import system permease protein ScaB (278 aa).

8 helical membrane-spanning segments follow: residues 18–38 (ALIT…FIIL), 61–81 (ILGI…SIII), 94–114 (TAIG…ISVA), 134–154 (LDMW…SIFF), 174–194 (VNFY…TAMQ), 196–216 (VGTI…YLYA), 222–242 (MILL…FIGY), and 246–266 (VAAG…SFFI).

This sequence belongs to the ABC-3 integral membrane protein family. As to quaternary structure, the complex is composed of two ATP-binding proteins (ScaC), two transmembrane proteins (ScaB) and a solute-binding protein (ScaA).

Its subcellular location is the cell membrane. Its function is as follows. Part of the high-affinity ABC transporter complex ScaABC involved in manganese import. Probably responsible for the translocation of the substrate across the membrane. Essential for growth under Mn(2+)-limiting conditions. This Streptococcus gordonii protein is Manganese import system permease protein ScaB.